Here is a 588-residue protein sequence, read N- to C-terminus: Pre-mRNA 3'-end-processing factor FIP1 (588 aa).

Residues 1–10 show a composition bias toward basic and acidic residues; that stretch reads MSAGEVERLV. Disordered regions lie at residues 1–81, 223–291, and 334–588; these read MSAG…EDDV, QGRT…ESPD, and VDNN…TPAE. A sufficient for interaction with PAPOLA region spans residues 1–96; that stretch reads MSAGEVERLV…DIKTGAPQYG (96 aa). Residues 1–341 form a necessary for stimulating PAPOLA activity region; that stretch reads MSAGEVERLV…TAVDNNFSKP (341 aa). 2 stretches are compositionally biased toward acidic residues: residues 19–40 and 66–80; these read GDEE…EEEN and TEDD…DEDD. Phosphoserine occurs at positions 70, 72, and 74. The tract at residues 122 to 228 is sufficient for interaction with CPSF4; sequence KGVDLDAPGS…FKVQQGRTGN (107 aa). A compositionally biased stretch (low complexity) spans 259–270; that stretch reads STSSQSQTSTAS. Over residues 280 to 291 the composition is skewed to basic and acidic residues; the sequence is WQDRYGRAESPD. Ser-289 is modified (phosphoserine). Residues 340-398 show a composition bias toward pro residues; it reads KPPPFFPPGAPPTHLPPPPFLPPPPTVSTAPPLIPPPGIPITVPPPGFPPPPGAPPPSL. The residue at position 420 (Tyr-420) is a Phosphotyrosine. The sufficient for interaction with CPSF1 and CSTF3 stretch occupies residues 437–588; sequence SLVDTSKQWD…QESTEATPAE (152 aa). Basic and acidic residues predominate over residues 448–486; the sequence is YARREKDRDRERDRDRERDRDRDRERERTRERERERDHS. Positions 451-484 are arg/Asp/Glu-rich domain; that stretch reads REKDRDRERDRDRERDRDRDRERERTRERERERD. Ser-486 carries the post-translational modification Phosphoserine. Position 488 is a phosphothreonine (Thr-488). Ser-490 and Ser-494 each carry phosphoserine. Basic and acidic residues predominate over residues 495–522; the sequence is DEERYRYREYAERGYERHRASREKEERH. The segment covering 536–545 has biased composition (basic residues); the sequence is KSSRSNSRRR. Ser-548 carries the phosphoserine modification. The span at 554-564 shows a compositional bias: basic residues; sequence HRRHKHKKSKR.

The protein belongs to the FIP1 family. Component of the cleavage and polyadenylation specificity factor (CPSF) complex, composed of CPSF1, CPSF2, CPSF3, CPSF4 and FIP1L1. Found in a complex with CPSF1, FIP1L1 and PAPOLA. Interacts with CPSF1, CPSF4, CSTF2 and CSTF3. Interacts with AHCYL1 (when phosphorylated); the interaction is direct and associates AHCYL1 with the CPSF complex and RNA. Interacts with PAPOLA; the interaction seems to be increased by the interaction with AHCYL1. Interacts with NUDT21/CPSF5; this interaction occurs in a RNA sequence-specific manner. Interacts (preferentially via unphosphorylated form and Arg/Glu/Asp-rich domain) with CPSF6 (via Arg/Ser-rich domain); this interaction mediates, at least in part, the interaction between the CFIm and CPSF complexes and may be inhibited by CPSF6 hyper-phosphorylation. Interacts (preferentially via unphosphorylated form and Arg/Asp/Glu-rich domain) with CPSF7 (via Arg/Ser-rich domain); this interaction mediates, at least in part, the interaction between the CFIm and CPSF complexes and may be inhibited by CPSF7 hyper-phosphorylation.

It is found in the nucleus. In terms of biological role, component of the cleavage and polyadenylation specificity factor (CPSF) complex that plays a key role in pre-mRNA 3'-end formation, recognizing the AAUAAA signal sequence and interacting with poly(A) polymerase and other factors to bring about cleavage and poly(A) addition. FIP1L1 contributes to poly(A) site recognition and stimulates poly(A) addition. Binds to U-rich RNA sequence elements surrounding the poly(A) site. May act to tether poly(A) polymerase to the CPSF complex. The chain is Pre-mRNA 3'-end-processing factor FIP1 (FIP1L1) from Pongo abelii (Sumatran orangutan).